Consider the following 370-residue polypeptide: Platelet-derived growth factor D (370 aa).

Positions 1–18 are cleaved as a signal peptide; it reads MHRLIFVYTLICANFCSC. The region spanning 52-170 is the CUB domain; it reads RDETIQVKGN…PGFKIYYSLL (119 aa). A disulfide bridge links cysteine 109 with cysteine 131. N-linked (GlcNAc...) asparagine glycosylation is present at asparagine 276. 2 disulfide bridges follow: cysteine 302–cysteine 360 and cysteine 306–cysteine 362.

The protein belongs to the PDGF/VEGF growth factor family. As to quaternary structure, homodimer; disulfide-linked. Interacts with PDGFRB homodimers, and with heterodimers formed by PDGFRA and PDGFRB. Post-translationally, activated by proteolytic cleavage. Proteolytic removal of the N-terminal CUB domain releasing the core domain is necessary for unmasking the receptor-binding epitopes of the core domain. Cleavage after Arg-247 or Arg-249 by urokinase plasminogen activator gives rise to the active form. In terms of tissue distribution, expressed at high levels in the heart, pancreas, adrenal gland and ovary and at low levels in placenta, liver, kidney, prostate, testis, small intestine, spleen and colon. In the kidney, expressed by the visceral epithelial cells of the glomeruli. A widespread expression is also seen in the medial smooth muscle cells of arteries and arterioles, as well as in smooth muscle cells of vasa rectae in the medullary area. Expressed in the adventitial connective tissue surrounding the suprarenal artery. In chronic obstructive nephropathy, a persistent expression is seen in glomerular visceral epithelial cells and vascular smooth muscle cells, as well as de novo expression by periglomerular interstitial cells and by some neointimal cells of atherosclerotic vessels. Expression in normal prostate is seen preferentially in the mesenchyme of the gland while expression is increased and more profuse in prostate carcinoma. Expressed in many ovarian, lung, renal and brain cancer-derived cell lines.

Its subcellular location is the secreted. Its function is as follows. Growth factor that plays an essential role in the regulation of embryonic development, cell proliferation, cell migration, survival and chemotaxis. Potent mitogen for cells of mesenchymal origin. Plays an important role in wound healing. Induces macrophage recruitment, increased interstitial pressure, and blood vessel maturation during angiogenesis. Can initiate events that lead to a mesangial proliferative glomerulonephritis, including influx of monocytes and macrophages and production of extracellular matrix. The sequence is that of Platelet-derived growth factor D (PDGFD) from Homo sapiens (Human).